A 1090-amino-acid polypeptide reads, in one-letter code: Vinculin (1090 aa).

Repeat copies occupy residues 339-446 (DADN…SQNS) and 455-561 (QNAQ…DLGD). The segment at 339–561 (DADNVTVMRK…LKNALRDLGD (223 aa)) is 2 X repeats. 2 disordered regions span residues 811–842 (GVPMSNGRHSSYQESISRASPYNPPPPSSQVI) and 864–895 (DIPAPPRPPPPVELSPPPRPPPPPEYDEEEET). Over residues 817 to 830 (GRHSSYQESISRAS) the composition is skewed to polar residues. Residues 866-887 (PAPPRPPPPVELSPPPRPPPPP) are compositionally biased toward pro residues.

The protein belongs to the vinculin/alpha-catenin family. In terms of assembly, may interact with sorb-1. In terms of tissue distribution, expressed in gonadal sheath cells and the spermatheca. Expressed in body wall muscles.

The protein localises to the cytoplasm. It localises to the cytoskeleton. The protein resides in the cell junction. It is found in the adherens junction. Its subcellular location is the cell membrane. The protein localises to the focal adhesion. Involved in cell adhesion. May be involved in the attachment of the actin-based microfilaments to the plasma membrane. Involved in ovulation. The sequence is that of Vinculin from Caenorhabditis elegans.